The following is a 1249-amino-acid chain: Clustered mitochondria protein homolog (1249 aa).

A disordered region spans residues 1–32; that stretch reads MAQTNGELEHSKETPEQLTNGNHPEETQEEDN. The Clu domain occupies 318 to 562; that stretch reads DITRSQENYL…RVTPLDVMWQ (245 aa). Residues 605–628 show a composition bias toward basic and acidic residues; sequence KAEADAAKAESSEATESKEQASEE. Disordered regions lie at residues 605–636 and 868–903; these read KAEA…DQER and KAPA…AAKE. 3 TPR repeats span residues 974–1007, 1016–1049, and 1058–1091; these read AKLY…TERT, ILSY…WKII, and ITTM…CESL. The interval 1174–1249 is disordered; sequence NMNPRSLGTK…KLRGSKKSSA (76 aa). A compositionally biased stretch (polar residues) spans 1176–1190; that stretch reads NPRSLGTKIQPQVGQ.

This sequence belongs to the CLU family. As to quaternary structure, may associate with the eukaryotic translation initiation factor 3 (eIF-3) complex.

The protein resides in the cytoplasm. In terms of biological role, mRNA-binding protein involved in proper cytoplasmic distribution of mitochondria. The chain is Clustered mitochondria protein homolog from Aspergillus niger (strain ATCC MYA-4892 / CBS 513.88 / FGSC A1513).